The primary structure comprises 212 residues: Peptide methionine sulfoxide reductase MsrA (212 aa).

C52 is a catalytic residue.

The protein belongs to the MsrA Met sulfoxide reductase family.

The enzyme catalyses L-methionyl-[protein] + [thioredoxin]-disulfide + H2O = L-methionyl-(S)-S-oxide-[protein] + [thioredoxin]-dithiol. It carries out the reaction [thioredoxin]-disulfide + L-methionine + H2O = L-methionine (S)-S-oxide + [thioredoxin]-dithiol. Has an important function as a repair enzyme for proteins that have been inactivated by oxidation. Catalyzes the reversible oxidation-reduction of methionine sulfoxide in proteins to methionine. In Salmonella schwarzengrund (strain CVM19633), this protein is Peptide methionine sulfoxide reductase MsrA.